We begin with the raw amino-acid sequence, 92 residues long: Putative septation protein SpoVG (92 aa).

The protein belongs to the SpoVG family.

Its function is as follows. Could be involved in septation. This chain is Putative septation protein SpoVG, found in Thermoanaerobacter sp. (strain X514).